The primary structure comprises 208 residues: CD209 antigen-like protein E (208 aa).

Topologically, residues 1–16 (MRAPQMGSLGFLDKGH) are cytoplasmic. A helical; Signal-anchor for type II membrane protein membrane pass occupies residues 17–37 (IPLVLQLLFLILFTGLLVAII). The Extracellular portion of the chain corresponds to 38-208 (IQVSKMPSSE…KIATTCLSKW (171 aa)). 3 cysteine pairs are disulfide-bonded: Cys-77–Cys-88, Cys-105–Cys-197, and Cys-176–Cys-189. Residues 83-198 (FFNGNCYFFS…CEQRKFWICK (116 aa)) form the C-type lectin domain.

It localises to the membrane. Functionally, putative pathogen-recognition receptor. May mediate the endocytosis of pathogens which are subsequently degraded in lysosomal compartments. The polypeptide is CD209 antigen-like protein E (Cd209e) (Mus musculus (Mouse)).